The following is a 375-amino-acid chain: Growth/differentiation factor 8 (375 aa).

Residues 1-23 (MQKLQIYVYIYLFMLIVAGPVDL) form the signal peptide. Positions 24–266 (NENSEQKENV…VTDTPKRSRR (243 aa)) are excised as a propeptide. Asn71 is a glycosylation site (N-linked (GlcNAc...) asparagine). 4 disulfides stabilise this stretch: Cys272/Cys282, Cys281/Cys340, Cys309/Cys372, and Cys313/Cys374.

It belongs to the TGF-beta family. As to quaternary structure, homodimer; disulfide-linked. Interacts with WFIKKN2, leading to inhibit its activity. Interacts with FSTL3. Post-translationally, synthesized as large precursor molecule that undergoes proteolytic cleavage to generate an N-terminal propeptide and a disulfide linked C-terminal dimer, which is the biologically active molecule. The circulating form consists of a latent complex of the C-terminal dimer and other proteins, including its propeptide, which maintain the C-terminal dimer in a latent, inactive state. Ligand activation requires additional cleavage of the prodomain by a tolloid-like metalloproteinase.

It localises to the secreted. Acts specifically as a negative regulator of skeletal muscle growth. This is Growth/differentiation factor 8 (MSTN) from Sus scrofa (Pig).